The chain runs to 510 residues: Monocarboxylate transporter 14 (510 aa).

The Cytoplasmic portion of the chain corresponds to 1–27 (MYTSHEDIGYDFEDGPKDKKTLKPHPN). The next 6 membrane-spanning stretches (helical) occupy residues 28–48 (IDGGWAWMMVLSSFFVHILIM), 74–94 (WVSSLSMGITLIVGPFIGLFI), 103–123 (AIIGGLVNSLGWVLSAYAANV), 127–147 (FITFGVAAGLGSGMAYLPAVV), 159–179 (LAQGLSTTGTGFGTFLMTVLL), and 191–209 (AMLIQGAVSLNLCVCGALM). The tract at residues 214–255 (PGKNPNDPGEKDVRGLPAHSTESVKSTGQQGRTEEKDGGLGN) is disordered. Residues 233 to 244 (STESVKSTGQQG) show a composition bias toward polar residues. A run of 6 helical transmembrane segments spans residues 315–335 (MFVAFIFWALFAYSSFVIPFI), 353–373 (FPLTSIIAIVHIFGKVILGVI), 379–399 (ISVWNVFLLANFTLVLSIFIL), 408–428 (LAVICALIGFSSGYFSLMPVV), 443–463 (GIIICANGISALLGPPFAGWI), and 474–494 (FYICGLLYMIGILFLLIQPCI). Topologically, residues 495–510 (RIIEQSRRKYMDGAHV) are cytoplasmic.

The protein belongs to the major facilitator superfamily. Monocarboxylate porter (TC 2.A.1.13) family.

It is found in the cell membrane. Functionally, proton-linked monocarboxylate transporter. May catalyze the transport of monocarboxylates across the plasma membrane. This Homo sapiens (Human) protein is Monocarboxylate transporter 14 (SLC16A14).